A 192-amino-acid polypeptide reads, in one-letter code: Phage-like element PBSX protein XkdU (192 aa).

It to B.subtilis YqcA.

The chain is Phage-like element PBSX protein XkdU (xkdU) from Bacillus subtilis (strain 168).